The sequence spans 173 residues: Mesencephalic astrocyte-derived neurotrophic factor homolog (173 aa).

The first 22 residues, Met-1 to Ala-22, serve as a signal peptide directing secretion. 4 cysteine pairs are disulfide-bonded: Cys-28-Cys-114, Cys-31-Cys-103, Cys-61-Cys-72, and Cys-148-Cys-151.

The protein belongs to the ARMET family.

Its subcellular location is the secreted. Functionally, required during the maturation of the embryonic nervous system for maintenance of neuronal and cuticular connectivity. Essential for maintenance of dopaminergic neurons and dopamine levels. The chain is Mesencephalic astrocyte-derived neurotrophic factor homolog from Drosophila erecta (Fruit fly).